We begin with the raw amino-acid sequence, 229 residues long: MSTWANLGLQDSASPLMEQLIFFHDHALLILVMITVLVGYLMFMLFFNSYVNRFLLHGQLIEMIWTILPAIILLFIAMPSLRLLYLLDEINEPSITLKSIGHQWYWSYEYSDFNNVEFDSYMIPTNELSNDGFRLLDVDNRIVLPMNSQIRILVTAADVIHSWTVPALGVKVDGTPGRLNQTNFFINRPGLFYGQCSEICGANHSFMPIVIESVPVNYFIKWISSTVNS.

Residues 1–26 are Mitochondrial intermembrane-facing; the sequence is MSTWANLGLQDSASPLMEQLIFFHDH. Residues 27–48 traverse the membrane as a helical segment; that stretch reads ALLILVMITVLVGYLMFMLFFN. Residues 49–62 lie on the Mitochondrial matrix side of the membrane; that stretch reads SYVNRFLLHGQLIE. A helical membrane pass occupies residues 63–82; the sequence is MIWTILPAIILLFIAMPSLR. Residues 83 to 229 lie on the Mitochondrial intermembrane side of the membrane; that stretch reads LLYLLDEINE…IKWISSTVNS (147 aa). Residues His161, Cys196, Glu198, Cys200, His204, and Met207 each coordinate Cu cation. Mg(2+) is bound at residue Glu198.

Belongs to the cytochrome c oxidase subunit 2 family. In terms of assembly, component of the cytochrome c oxidase (complex IV, CIV), a multisubunit enzyme composed of a catalytic core of 3 subunits and several supernumerary subunits. The complex exists as a monomer or a dimer and forms supercomplexes (SCs) in the inner mitochondrial membrane with ubiquinol-cytochrome c oxidoreductase (cytochrome b-c1 complex, complex III, CIII). Requires Cu cation as cofactor.

It localises to the mitochondrion inner membrane. It catalyses the reaction 4 Fe(II)-[cytochrome c] + O2 + 8 H(+)(in) = 4 Fe(III)-[cytochrome c] + 2 H2O + 4 H(+)(out). Component of the cytochrome c oxidase, the last enzyme in the mitochondrial electron transport chain which drives oxidative phosphorylation. The respiratory chain contains 3 multisubunit complexes succinate dehydrogenase (complex II, CII), ubiquinol-cytochrome c oxidoreductase (cytochrome b-c1 complex, complex III, CIII) and cytochrome c oxidase (complex IV, CIV), that cooperate to transfer electrons derived from NADH and succinate to molecular oxygen, creating an electrochemical gradient over the inner membrane that drives transmembrane transport and the ATP synthase. Cytochrome c oxidase is the component of the respiratory chain that catalyzes the reduction of oxygen to water. Electrons originating from reduced cytochrome c in the intermembrane space (IMS) are transferred via the dinuclear copper A center (CU(A)) of subunit 2 and heme A of subunit 1 to the active site in subunit 1, a binuclear center (BNC) formed by heme A3 and copper B (CU(B)). The BNC reduces molecular oxygen to 2 water molecules using 4 electrons from cytochrome c in the IMS and 4 protons from the mitochondrial matrix. This is Cytochrome c oxidase subunit 2 (mt:CoII) from Drosophila lowei (Fruit fly).